A 274-amino-acid polypeptide reads, in one-letter code: Uridine-5'-phosphate dioxygenase (274 aa).

Fe cation contacts are provided by His103, Asp105, and His246.

The cofactor is Fe(2+).

It catalyses the reaction UMP + 2-oxoglutarate + O2 = uridine-5'-aldehyde + succinate + phosphate + CO2. Its pathway is antibiotic biosynthesis. Inhibited by several divalent cations, including Zn(2+). Dioxygenase involved in the biosynthesis of the lipopeptidyl nucleoside antibiotic A-90289. Catalyzes the dephosphorylation and oxidation of UMP to generate uridine-5'-aldehyde, the first intermediate in the biosynthesis of A-90289. The protein is Uridine-5'-phosphate dioxygenase of Streptomyces sp.